Consider the following 125-residue polypeptide: Small ribosomal subunit protein uS13 (125 aa).

The protein belongs to the universal ribosomal protein uS13 family. In terms of assembly, part of the 30S ribosomal subunit. Forms a loose heterodimer with protein S19. Forms two bridges to the 50S subunit in the 70S ribosome.

Functionally, located at the top of the head of the 30S subunit, it contacts several helices of the 16S rRNA. In the 70S ribosome it contacts the 23S rRNA (bridge B1a) and protein L5 of the 50S subunit (bridge B1b), connecting the 2 subunits; these bridges are implicated in subunit movement. Contacts the tRNAs in the A and P-sites. This Rickettsia africae (strain ESF-5) protein is Small ribosomal subunit protein uS13.